The following is a 1075-amino-acid chain: Putative type I restriction enzyme MjaVIIP endonuclease subunit (1075 aa).

The protein belongs to the HsdR family. The type I restriction/modification system is composed of three polypeptides R, M and S.

It carries out the reaction Endonucleolytic cleavage of DNA to give random double-stranded fragments with terminal 5'-phosphates, ATP is simultaneously hydrolyzed.. Its function is as follows. The restriction (R) subunit of a type I restriction enzyme that recognizes 5'-CAAN(7)TGG-3' and cleaves a random distance away. The R subunit is required for both endonuclease and ATPase activities but not for modification. After locating a non-methylated recognition site, the enzyme complex serves as a molecular motor that translocates DNA in an ATP-dependent manner until a collision occurs that triggers cleavage. In Methanocaldococcus jannaschii (strain ATCC 43067 / DSM 2661 / JAL-1 / JCM 10045 / NBRC 100440) (Methanococcus jannaschii), this protein is Putative type I restriction enzyme MjaVIIP endonuclease subunit.